A 273-amino-acid chain; its full sequence is Shikimate dehydrogenase (NADP(+)) (273 aa).

Shikimate contacts are provided by residues 14–16 (SKS) and T61. The active-site Proton acceptor is K65. E77 is an NADP(+) binding site. Residues N86 and D102 each contribute to the shikimate site. NADP(+) is bound by residues 126-130 (GAGGA), 150-155 (NRTLSK), and M214. Y216 is a binding site for shikimate. An NADP(+)-binding site is contributed by G238.

Belongs to the shikimate dehydrogenase family. In terms of assembly, homodimer.

It catalyses the reaction shikimate + NADP(+) = 3-dehydroshikimate + NADPH + H(+). The protein operates within metabolic intermediate biosynthesis; chorismate biosynthesis; chorismate from D-erythrose 4-phosphate and phosphoenolpyruvate: step 4/7. Functionally, involved in the biosynthesis of the chorismate, which leads to the biosynthesis of aromatic amino acids. Catalyzes the reversible NADPH linked reduction of 3-dehydroshikimate (DHSA) to yield shikimate (SA). This Photobacterium profundum (strain SS9) protein is Shikimate dehydrogenase (NADP(+)).